The following is a 62-amino-acid chain: Short neurotoxin C (62 aa).

Polar residues predominate over residues 1 to 16 (RRCFNQQSSQPQTNKS). Residues 1 to 22 (RRCFNQQSSQPQTNKSCPPGEN) are disordered. 4 disulfide bridges follow: Cys-3–Cys-24, Cys-17–Cys-41, Cys-43–Cys-54, and Cys-55–Cys-60.

This sequence belongs to the three-finger toxin family. Short-chain subfamily. Type I alpha-neurotoxin sub-subfamily. As to expression, expressed by the venom gland.

The protein resides in the secreted. Binds to muscle nicotinic acetylcholine receptor (nAChR) and inhibit acetylcholine from binding to the receptor, thereby impairing neuromuscular transmission. This Laticauda laticaudata (Blue-ringed sea krait) protein is Short neurotoxin C.